Here is a 115-residue protein sequence, read N- to C-terminus: U31-theraphotoxin-Cg1a (115 aa).

The first 18 residues, 1 to 18, serve as a signal peptide directing secretion; sequence MKLCVIIIASLMVASVSG. The propeptide occupies 19-51; the sequence is RLRKIKGTELDKKMLLEKLGHGMDIRFEETPRA. Cystine bridges form between cysteine 52–cysteine 67, cysteine 60–cysteine 73, cysteine 64–cysteine 113, and cysteine 66–cysteine 86.

Belongs to the neurotoxin 03 (Tx2) family. 02 subfamily. In terms of tissue distribution, expressed by the venom gland.

It is found in the secreted. Functionally, probable ion channel inhibitor. The chain is U31-theraphotoxin-Cg1a from Chilobrachys guangxiensis (Chinese earth tiger tarantula).